A 278-amino-acid polypeptide reads, in one-letter code: NAD-capped RNA hydrolase NudC (278 aa).

R84 is a substrate binding site. The Zn(2+) site is built by C114 and C117. E127 serves as a coordination point for substrate. Residues C132 and C135 each coordinate Zn(2+). Position 140 (Y140) interacts with substrate. In terms of domain architecture, Nudix hydrolase spans 141 to 265; sequence PRLSPSMIVL…IARHLIDLYL (125 aa). The a divalent metal cation site is built by A174, E190, and E194. Residues 175-196 carry the Nudix box motif; that stretch reads GFVEAGESVEQCVVREVREEVG. Residue 208–215 coordinates substrate; sequence QNWPFPHS. An a divalent metal cation-binding site is contributed by E235. A257 is a binding site for substrate.

It belongs to the Nudix hydrolase family. NudC subfamily. In terms of assembly, homodimer. Mg(2+) serves as cofactor. The cofactor is Mn(2+). Zn(2+) is required as a cofactor.

The catalysed reaction is a 5'-end NAD(+)-phospho-ribonucleoside in mRNA + H2O = a 5'-end phospho-adenosine-phospho-ribonucleoside in mRNA + beta-nicotinamide D-ribonucleotide + 2 H(+). The enzyme catalyses NAD(+) + H2O = beta-nicotinamide D-ribonucleotide + AMP + 2 H(+). It carries out the reaction NADH + H2O = reduced beta-nicotinamide D-ribonucleotide + AMP + 2 H(+). MRNA decapping enzyme that specifically removes the nicotinamide adenine dinucleotide (NAD) cap from a subset of mRNAs by hydrolyzing the diphosphate linkage to produce nicotinamide mononucleotide (NMN) and 5' monophosphate mRNA. The NAD-cap is present at the 5'-end of some mRNAs and stabilizes RNA against 5'-processing. Has preference for mRNAs with a 5'-end purine. Catalyzes the hydrolysis of a broad range of dinucleotide pyrophosphates. This is NAD-capped RNA hydrolase NudC from Pseudomonas aeruginosa (strain ATCC 15692 / DSM 22644 / CIP 104116 / JCM 14847 / LMG 12228 / 1C / PRS 101 / PAO1).